The following is a 214-amino-acid chain: EEF1A lysine methyltransferase 1 (214 aa).

Serine 2 is subject to N-acetylserine. A Phosphoserine modification is found at serine 2.

It belongs to the class I-like SAM-binding methyltransferase superfamily. EFM5 family.

The protein localises to the cytoplasm. It carries out the reaction L-lysyl-[protein] + 3 S-adenosyl-L-methionine = N(6),N(6),N(6)-trimethyl-L-lysyl-[protein] + 3 S-adenosyl-L-homocysteine + 3 H(+). In terms of biological role, protein N-lysine methyltransferase that selectively catalyzes the trimethylation of EEF1A at 'Lys-79'. The polypeptide is EEF1A lysine methyltransferase 1 (Homo sapiens (Human)).